Consider the following 770-residue polypeptide: Kinesin-like protein klpA (770 aa).

A disordered region spans residues 1–152 (MENVQSRMQG…GLGKRGEWDQ (152 aa)). Low complexity predominate over residues 85-105 (SSTLTRSASAASRPRGPLSSS). Residues 106–119 (TSGRPKTSMSTSRR) are compositionally biased toward polar residues. The segment covering 134–152 (THQEERSYGGLGKRGEWDQ) has biased composition (basic and acidic residues). Positions 175-425 (QESSGLKDAL…QELKGNIRVF (251 aa)) form a coiled coil. Residues 421–756 (NIRVFCRVRP…LKFATKVHNT (336 aa)) form the Kinesin motor domain. 514 to 521 (GQTGSGKT) serves as a coordination point for ATP.

Belongs to the TRAFAC class myosin-kinesin ATPase superfamily. Kinesin family. NCD subfamily.

Its subcellular location is the cytoplasm. The protein resides in the cytoskeleton. This is Kinesin-like protein klpA (klpA) from Emericella nidulans (strain FGSC A4 / ATCC 38163 / CBS 112.46 / NRRL 194 / M139) (Aspergillus nidulans).